Consider the following 177-residue polypeptide: Protein TERMINAL FLOWER 1 (177 aa).

It belongs to the phosphatidylethanolamine-binding protein family. As to expression, expressed below the apical dome of inflorescence and coflorescence meristems, and in inflorescence stem.

The protein localises to the cytoplasm. Its function is as follows. Controls inflorescence meristem identity and is required for maintenance of an indeterminate inflorescence. Prevents the expression of 'APETALA1' and 'LEAFY'. Also plays a role in the regulation of the time of flowering in the long-day flowering pathway. May form complexes with phosphorylated ligands by interfering with kinases and their effectors. This chain is Protein TERMINAL FLOWER 1 (TFL1), found in Arabidopsis thaliana (Mouse-ear cress).